The sequence spans 214 residues: Adenylate kinase (214 aa).

Residue 10 to 15 coordinates ATP; that stretch reads GAGKGT. The interval 30–59 is NMP; it reads STGDMFRAALKNQTPLGLKAKEYMDKGELV. Residues threonine 31, arginine 36, 57–59, 85–88, and glutamine 92 each bind AMP; these read ELV and GFPR. The interval 126–163 is LID; it reads GRRVCRQCGATYHVKFNPPKVEGVCDACGGELYQRSDD. Arginine 127 lines the ATP pocket. 2 residues coordinate Zn(2+): cysteine 130 and cysteine 133. 136 to 137 is an ATP binding site; it reads TY. Cysteine 150 and cysteine 153 together coordinate Zn(2+). The AMP site is built by arginine 160 and arginine 171. Position 199 (lysine 199) interacts with ATP.

Belongs to the adenylate kinase family. In terms of assembly, monomer.

Its subcellular location is the cytoplasm. It catalyses the reaction AMP + ATP = 2 ADP. It functions in the pathway purine metabolism; AMP biosynthesis via salvage pathway; AMP from ADP: step 1/1. Its function is as follows. Catalyzes the reversible transfer of the terminal phosphate group between ATP and AMP. Plays an important role in cellular energy homeostasis and in adenine nucleotide metabolism. The protein is Adenylate kinase of Carboxydothermus hydrogenoformans (strain ATCC BAA-161 / DSM 6008 / Z-2901).